The sequence spans 132 residues: Chaperone protein SycT (132 aa).

Binds to YopT.

Its function is as follows. Functions as a specific chaperone for YopT. In Yersinia pestis, this protein is Chaperone protein SycT (sycT).